A 226-amino-acid polypeptide reads, in one-letter code: EEF1A lysine methyltransferase 1 (226 aa).

Serine 2 carries the N-acetylserine modification. Serine 2 carries the post-translational modification Phosphoserine.

Belongs to the class I-like SAM-binding methyltransferase superfamily. EFM5 family.

Its subcellular location is the cytoplasm. The enzyme catalyses L-lysyl-[protein] + 3 S-adenosyl-L-methionine = N(6),N(6),N(6)-trimethyl-L-lysyl-[protein] + 3 S-adenosyl-L-homocysteine + 3 H(+). Its function is as follows. Protein-lysine methyltransferase that selectively catalyzes the trimethylation of EEF1A at 'Lys-79'. The protein is EEF1A lysine methyltransferase 1 of Bos taurus (Bovine).